A 388-amino-acid chain; its full sequence is Mannitol-1-phosphate 5-dehydrogenase (388 aa).

An NAD(+)-binding site is contributed by 5–16; sequence AVHFGGGNIGRG. Residue lysine 213 is part of the active site.

The protein belongs to the mannitol dehydrogenase family. As to quaternary structure, monomer.

The enzyme catalyses D-mannitol 1-phosphate + NAD(+) = beta-D-fructose 6-phosphate + NADH + H(+). Functionally, catalyzes the NAD(H)-dependent interconversion of D-fructose 6-phosphate and D-mannitol 1-phosphate in the mannitol metabolic pathway. This Coccidioides immitis (strain RS) (Valley fever fungus) protein is Mannitol-1-phosphate 5-dehydrogenase.